The primary structure comprises 240 residues: RNA-free ribonuclease P (240 aa).

The protein belongs to the HARP family.

It catalyses the reaction Endonucleolytic cleavage of RNA, removing 5'-extranucleotides from tRNA precursor.. RNA-free RNase P that catalyzes the removal of the 5'-leader sequence from pre-tRNA to produce the mature 5'-terminus. The protein is RNA-free ribonuclease P of Methanococcus aeolicus (strain ATCC BAA-1280 / DSM 17508 / OCM 812 / Nankai-3).